A 437-amino-acid chain; its full sequence is Minor fimbrial subunit HifE (437 aa).

A signal peptide spans 1–30; the sequence is MNKKSYINHYLTLFKVTTLLFTLSSNPVWA.

The protein belongs to the fimbrial protein family.

It localises to the fimbrium. In terms of biological role, may be a minor structural protein required for pilus biogenesis. May be the adhesive component in the pili. In Haemophilus influenzae, this protein is Minor fimbrial subunit HifE (hifE).